The primary structure comprises 660 residues: PAN2-PAN3 deadenylation complex subunit PAN3 (660 aa).

A C3H1-type zinc finger spans residues 7-36 (SAKDTFCKNVLIYGYCKYENKGCAFSHTVK). Disordered stretches follow at residues 36-60 (KPTS…TNAD) and 150-186 (SPVM…PTSA). Over residues 43 to 59 (GSQGSNATTNSSGNTNA) the composition is skewed to low complexity. The short motif at 59–79 (ADMKKKFNFNTPSFQPSTVPN) is the PABPC-interacting motif-2 (PAM-2) element. Positions 150-159 (SPVMAQSVST) are enriched in polar residues. Positions 252–528 (QTLPRSNLPD…LQEFNRNHLS (277 aa)) are pseudokinase domain. Residues arginine 304, 358–365 (DYFPNSNT), and 415–416 (SK) each bind ATP. Residues 529-567 (RRILNFCSNAQDSQDFMESQLSTELENARVFRLITKLNF) adopt a coiled-coil conformation. A knob domain region spans residues 568 to 660 (IIDRPEYDND…DSAFRTLTRG (93 aa)).

This sequence belongs to the protein kinase superfamily. PAN3 family. As to quaternary structure, homodimer. Forms a heterotrimer with a catalytic subunit PAN2 to form the poly(A)-nuclease (PAN) deadenylation complex. Interacts (via PAM-2 motif) with poly(A)-binding protein PAB1 (via PABC domain), conferring substrate specificity of the enzyme complex.

It localises to the cytoplasm. Regulatory subunit of the poly(A)-nuclease (PAN) deadenylation complex, one of two cytoplasmic mRNA deadenylases involved in mRNA turnover. PAN specifically shortens poly(A) tails of RNA and the activity is stimulated by poly(A)-binding protein PAB1. PAN deadenylation is followed by rapid degradation of the shortened mRNA tails by the CCR4-NOT complex. Deadenylated mRNAs are then degraded by two alternative mechanisms, namely exosome-mediated 3'-5' exonucleolytic degradation, or deadenylation-dependent mRNA decaping and subsequent 5'-3' exonucleolytic degradation by XRN1. May also be involved in post-transcriptional maturation of mRNA poly(A) tails. PAN3 acts as a positive regulator for PAN activity, recruiting the catalytic subunit PAN2 to mRNA via its interaction with RNA and with PAB1. The sequence is that of PAN2-PAN3 deadenylation complex subunit PAN3 from Debaryomyces hansenii (strain ATCC 36239 / CBS 767 / BCRC 21394 / JCM 1990 / NBRC 0083 / IGC 2968) (Yeast).